Here is a 254-residue protein sequence, read N- to C-terminus: Diphthine synthase (254 aa).

S-adenosyl-L-methionine-binding positions include Leu-11, Asp-86, Ile-89, 114–115, Leu-166, Leu-207, and His-232; that span reads SV.

The protein belongs to the diphthine synthase family. In terms of assembly, homodimer.

It catalyses the reaction 2-[(3S)-amino-3-carboxypropyl]-L-histidyl-[translation elongation factor 2] + 3 S-adenosyl-L-methionine = diphthine-[translation elongation factor 2] + 3 S-adenosyl-L-homocysteine + 3 H(+). It participates in protein modification; peptidyl-diphthamide biosynthesis. In terms of biological role, S-adenosyl-L-methionine-dependent methyltransferase that catalyzes the trimethylation of the amino group of the modified target histidine residue in translation elongation factor 2 (EF-2), to form an intermediate called diphthine. The three successive methylation reactions represent the second step of diphthamide biosynthesis. The sequence is that of Diphthine synthase from Sulfurisphaera tokodaii (strain DSM 16993 / JCM 10545 / NBRC 100140 / 7) (Sulfolobus tokodaii).